The following is a 298-amino-acid chain: Putative F-box and FNIP repeat-containing protein R286 (298 aa).

The 45-residue stretch at 4–48 folds into the F-box domain; the sequence is LNVLESHVILHIIEFLPDHEKIKFMSTCKSLYEFRCHVTYNNFYV. FNIP repeat units lie at residues 124–165 and 255–297; these read FNKP…LGHN and WNFD…FISR.

The polypeptide is Putative F-box and FNIP repeat-containing protein R286 (Acanthamoeba polyphaga (Amoeba)).